Here is a 117-residue protein sequence, read N- to C-terminus: Large ribosomal subunit protein uL18 (117 aa).

This sequence belongs to the universal ribosomal protein uL18 family. In terms of assembly, part of the 50S ribosomal subunit; part of the 5S rRNA/L5/L18/L25 subcomplex. Contacts the 5S and 23S rRNAs.

Functionally, this is one of the proteins that bind and probably mediate the attachment of the 5S RNA into the large ribosomal subunit, where it forms part of the central protuberance. The chain is Large ribosomal subunit protein uL18 from Mycoplasma mobile (strain ATCC 43663 / 163K / NCTC 11711) (Mesomycoplasma mobile).